The primary structure comprises 380 residues: Methenyltetrahydrofolate synthase domain-containing protein (380 aa).

A compositionally biased stretch (basic and acidic residues) spans 245–258; the sequence is EEQAGKDVTLRDGP. Disordered regions lie at residues 245 to 283 and 361 to 380; these read EEQA…PLSS and LVGS…IAGP. An RRM domain is found at 282 to 355; sequence SSVQIGNLPR…NTVRVVLARQ (74 aa).

This Bos taurus (Bovine) protein is Methenyltetrahydrofolate synthase domain-containing protein (MTHFSD).